Consider the following 454-residue polypeptide: Pup--protein ligase (454 aa).

Glu9 provides a ligand contact to Mg(2+). Residue Arg53 coordinates ATP. Tyr55 serves as a coordination point for Mg(2+). Asp57 acts as the Proton acceptor in catalysis. Glu63 is a binding site for Mg(2+). Thr66 and Trp420 together coordinate ATP.

The protein belongs to the Pup ligase/Pup deamidase family. Pup-conjugating enzyme subfamily.

The catalysed reaction is ATP + [prokaryotic ubiquitin-like protein]-L-glutamate + [protein]-L-lysine = ADP + phosphate + N(6)-([prokaryotic ubiquitin-like protein]-gamma-L-glutamyl)-[protein]-L-lysine.. The protein operates within protein degradation; proteasomal Pup-dependent pathway. It participates in protein modification; protein pupylation. Functionally, catalyzes the covalent attachment of the prokaryotic ubiquitin-like protein modifier Pup to the proteasomal substrate proteins, thereby targeting them for proteasomal degradation. This tagging system is termed pupylation. The ligation reaction involves the side-chain carboxylate of the C-terminal glutamate of Pup and the side-chain amino group of a substrate lysine. This chain is Pup--protein ligase, found in Pseudarthrobacter chlorophenolicus (strain ATCC 700700 / DSM 12829 / CIP 107037 / JCM 12360 / KCTC 9906 / NCIMB 13794 / A6) (Arthrobacter chlorophenolicus).